We begin with the raw amino-acid sequence, 561 residues long: MAPANTLSAWSDLQSHHSKVGKTFVLKDAFKSDPERFSKFARTFTLPADISSDSPNATDILFDFSKNLVTEETLDKLVRLAEEAGVEKKRDAMFAGEKINFTEDRAVYHVALRNVSNQEMKVDGVDVMNTKGGVNEVLQHMKEFSEQVRSGEWKGYTGKKLTNIINIGIGGSDLGPVMVTEALKHYGAKDMTLRFVSNVDGTHIAEALAASDPETTLFLIASKTFTTAETITNANTAKSWFLEKTGGQGDITKHFVALSTNEAEVTKFGIDAKNMFGFESWVGGRYSVWSAIGLSVALYVGYENFHKFLAGAHAMDNHFRTAPLKENIPVLGGILSVWYSNFYNAQTHLIAPFDQYLHRFPAYLQQLSMESNGKSITSDGSAAKYTTGPIVFGEPCTNAQHSFFQLVHQGTKLIPADFILAAKSHNPISNNLHQKMLASNYLAQAEALMVGKTAEEVRAEGNVPEHLVPHKVFLGNRPTTSILVGGHIGPAELGALIVYYEHLTFTEGAIWDINSFDQWGVELGKVLAKKILKEIDEPGAGSGHDASTGGLLGAFKKYADF.

D-glucose 6-phosphate is bound by residues 171–172, 222–227, Gln-366, Glu-370, His-401, and Lys-525; these read GS and SKTFTT. The active-site Proton donor is Glu-370. Active-site residues include His-401 and Lys-525.

This sequence belongs to the GPI family. Homodimer.

Its subcellular location is the cytoplasm. It localises to the cytosol. It carries out the reaction alpha-D-glucose 6-phosphate = beta-D-fructose 6-phosphate. Its pathway is carbohydrate degradation; glycolysis; D-glyceraldehyde 3-phosphate and glycerone phosphate from D-glucose: step 2/4. In terms of biological role, in the cytoplasm, catalyzes the conversion of glucose-6-phosphate to fructose-6-phosphate, the second step in glycolysis, and the reverse reaction during gluconeogenesis. This is Glucose-6-phosphate isomerase (pgi-1) from Neurospora crassa (strain ATCC 24698 / 74-OR23-1A / CBS 708.71 / DSM 1257 / FGSC 987).